Consider the following 218-residue polypeptide: MKSESKIDWTVPRPNKNPKTKQPYKRGRNWGIVVYPESLPENWKDIIRQEPIAVSPLHDKDVNPDGEKKKSHYHLVLNYKGNKSFEQIDEIARSLRAPAPQRISSLTGAVRYLTHMDNPEKYQYDNADIETFGGFDLESCLALSTGDKRQALRDMLAFISENEIMHLKDFADYCMSEEAPAGWFELLTERNTLFIKEYIKSNWQKQQYASKNINKMSD.

The disordered stretch occupies residues 1-26; sequence MKSESKIDWTVPRPNKNPKTKQPYKR. Residues 16–26 are compositionally biased toward basic residues; that stretch reads KNPKTKQPYKR.

This sequence belongs to the Gram-positive plasmids replication protein type 2 family.

In terms of biological role, is essential for plasmid replication. Nicks the positive strand at the plus origin of replication. The protein is Replication protein RepB (repB) of Lactiplantibacillus plantarum (Lactobacillus plantarum).